Reading from the N-terminus, the 21-residue chain is Hemolymph 65 kDa lectin BG04 (21 aa).

Hemolymph.

It is found in the secreted. Its function is as follows. Binds and precipitates antigens of the parasite Echinostoma paraensei. The chain is Hemolymph 65 kDa lectin BG04 (BG04) from Biomphalaria glabrata (Bloodfluke planorb).